A 369-amino-acid polypeptide reads, in one-letter code: MIKLKQLIAATLLLSTAFGVHAERLKDIASISGVRANQLIGYGLVVGLNGTGDQTTQTPFTLQTFNNMLSQFGIKVPSGSGTVQLKNVAAVAVYADLPAFAKPGQTVDITVSSIGNSKSLRGGALLMTPMKGVDGNVYAIAQGNLVVGGFDAEGRDGSKITVNVPSSGRIPGGASVERSVPSGFNQGNTLTLNLNRSDFTTAKRIVDKINELLGPGVAQALDGGSVRVTAPLDPGQRVDYLSILENLEVDPGQTAAKVIINSRTGTIVIGQNVKVSPAAVTHGSLTVTITEDPIVSQPGALSGGQTAVVPRSRVNAQQELHPMFKFGPGTTLDEIVRAVNQVGAAPGDLMAILEALKQAGALQADLIVI.

The first 22 residues, 1–22 (MIKLKQLIAATLLLSTAFGVHA), serve as a signal peptide directing secretion.

The protein belongs to the FlgI family. In terms of assembly, the basal body constitutes a major portion of the flagellar organelle and consists of four rings (L,P,S, and M) mounted on a central rod.

It is found in the periplasm. Its subcellular location is the bacterial flagellum basal body. In terms of biological role, assembles around the rod to form the L-ring and probably protects the motor/basal body from shearing forces during rotation. The protein is Flagellar P-ring protein of Pseudomonas savastanoi pv. phaseolicola (strain 1448A / Race 6) (Pseudomonas syringae pv. phaseolicola (strain 1448A / Race 6)).